The following is a 119-amino-acid chain: Protein TusC (119 aa).

This sequence belongs to the DsrF/TusC family. In terms of assembly, heterohexamer, formed by a dimer of trimers. The hexameric TusBCD complex contains 2 copies each of TusB, TusC and TusD. The TusBCD complex interacts with TusE.

It localises to the cytoplasm. Functionally, part of a sulfur-relay system required for 2-thiolation of 5-methylaminomethyl-2-thiouridine (mnm(5)s(2)U) at tRNA wobble positions. The sequence is that of Protein TusC from Klebsiella pneumoniae (strain 342).